A 598-amino-acid chain; its full sequence is NADH-quinone oxidoreductase subunit C/D (598 aa).

The segment at 1-190 (MSIFTQEVSA…EAFSLDDERL (190 aa)) is NADH dehydrogenase I subunit C. An NADH dehydrogenase I subunit D region spans residues 214–598 (DYLFLNLGPN…IDFVMADVDR (385 aa)).

This sequence in the N-terminal section; belongs to the complex I 30 kDa subunit family. In the C-terminal section; belongs to the complex I 49 kDa subunit family. In terms of assembly, NDH-1 is composed of 13 different subunits. Subunits NuoB, CD, E, F, and G constitute the peripheral sector of the complex.

Its subcellular location is the cell inner membrane. It catalyses the reaction a quinone + NADH + 5 H(+)(in) = a quinol + NAD(+) + 4 H(+)(out). Its function is as follows. NDH-1 shuttles electrons from NADH, via FMN and iron-sulfur (Fe-S) centers, to quinones in the respiratory chain. The immediate electron acceptor for the enzyme in this species is believed to be ubiquinone. Couples the redox reaction to proton translocation (for every two electrons transferred, four hydrogen ions are translocated across the cytoplasmic membrane), and thus conserves the redox energy in a proton gradient. The polypeptide is NADH-quinone oxidoreductase subunit C/D (Shewanella woodyi (strain ATCC 51908 / MS32)).